Reading from the N-terminus, the 548-residue chain is Putative malate oxidoreductase [NAD] (548 aa).

Tyrosine 96 serves as the catalytic Proton donor. Catalysis depends on lysine 169, which acts as the Proton acceptor. A divalent metal cation contacts are provided by glutamate 240, aspartate 241, and aspartate 264. Residues alanine 297–alanine 300, asparagine 410, and asparagine 455 each bind NAD(+).

It belongs to the malic enzymes family. Mg(2+) serves as cofactor. Requires Mn(2+) as cofactor.

It catalyses the reaction (S)-malate + NAD(+) = pyruvate + CO2 + NADH. It carries out the reaction oxaloacetate + H(+) = pyruvate + CO2. The polypeptide is Putative malate oxidoreductase [NAD] (mez) (Mycobacterium tuberculosis (strain CDC 1551 / Oshkosh)).